The chain runs to 375 residues: Alcohol dehydrogenase 1 (375 aa).

At A1 the chain carries N-acetylalanine. Zn(2+)-binding residues include C46, H68, C98, C101, C104, C112, and C175. NAD(+)-binding positions include 200–205, D224, K229, 293–295, and R370; these read GLGGVG and VGL.

It belongs to the zinc-containing alcohol dehydrogenase family. Class-I subfamily. Zn(2+) serves as cofactor.

Its subcellular location is the cytoplasm. It carries out the reaction a primary alcohol + NAD(+) = an aldehyde + NADH + H(+). The catalysed reaction is a secondary alcohol + NAD(+) = a ketone + NADH + H(+). In Pelophylax perezi (Perez's frog), this protein is Alcohol dehydrogenase 1.